The chain runs to 184 residues: Lipid A acyltransferase PagP (184 aa).

A signal peptide spans 1–22 (MNIRHGIIAMSSTMLVPLAAEA). Residues histidine 57, aspartate 100, and serine 101 contribute to the active site.

This sequence belongs to the lipid A palmitoyltransferase family. In terms of assembly, homodimer.

It localises to the cell outer membrane. The enzyme catalyses a lipid A + a 1,2-diacyl-sn-glycero-3-phosphocholine = a hepta-acyl lipid A + a 2-acyl-sn-glycero-3-phosphocholine. The catalysed reaction is a lipid IVA + a 1,2-diacyl-sn-glycero-3-phosphocholine = a lipid IVB + a 2-acyl-sn-glycero-3-phosphocholine. It carries out the reaction a lipid IIA + a 1,2-diacyl-sn-glycero-3-phosphocholine = a lipid IIB + a 2-acyl-sn-glycero-3-phosphocholine. Transfers a fatty acid residue from the sn-1 position of a phospholipid to the N-linked hydroxyfatty acid chain on the proximal unit of lipid A or its precursors. The protein is Lipid A acyltransferase PagP of Methylobacillus flagellatus (strain ATCC 51484 / DSM 6875 / VKM B-1610 / KT).